Here is a 1033-residue protein sequence, read N- to C-terminus: Error-prone DNA polymerase (1033 aa).

The protein belongs to the DNA polymerase type-C family. DnaE2 subfamily.

The protein localises to the cytoplasm. The enzyme catalyses DNA(n) + a 2'-deoxyribonucleoside 5'-triphosphate = DNA(n+1) + diphosphate. In terms of biological role, DNA polymerase involved in damage-induced mutagenesis and translesion synthesis (TLS). It is not the major replicative DNA polymerase. This chain is Error-prone DNA polymerase, found in Teredinibacter turnerae (strain ATCC 39867 / T7901).